The primary structure comprises 492 residues: Glutamyl-tRNA(Gln) amidotransferase subunit A (492 aa).

Active-site charge relay system residues include K84 and S159. S183 acts as the Acyl-ester intermediate in catalysis.

It belongs to the amidase family. GatA subfamily. In terms of assembly, heterotrimer of A, B and C subunits.

The enzyme catalyses L-glutamyl-tRNA(Gln) + L-glutamine + ATP + H2O = L-glutaminyl-tRNA(Gln) + L-glutamate + ADP + phosphate + H(+). Its function is as follows. Allows the formation of correctly charged Gln-tRNA(Gln) through the transamidation of misacylated Glu-tRNA(Gln) in organisms which lack glutaminyl-tRNA synthetase. The reaction takes place in the presence of glutamine and ATP through an activated gamma-phospho-Glu-tRNA(Gln). This Anaeromyxobacter dehalogenans (strain 2CP-C) protein is Glutamyl-tRNA(Gln) amidotransferase subunit A.